We begin with the raw amino-acid sequence, 136 residues long: Small ribosomal subunit protein uS9 (136 aa).

The interval 115–136 is disordered; it reads KVKERKKPGLRKARKARQFSKR. Positions 117–136 are enriched in basic residues; it reads KERKKPGLRKARKARQFSKR.

This sequence belongs to the universal ribosomal protein uS9 family.

The sequence is that of Small ribosomal subunit protein uS9 from Mycoplasmopsis pulmonis (strain UAB CTIP) (Mycoplasma pulmonis).